The sequence spans 150 residues: Ribosome maturation factor RimP (150 aa).

This sequence belongs to the RimP family.

Its subcellular location is the cytoplasm. Functionally, required for maturation of 30S ribosomal subunits. The chain is Ribosome maturation factor RimP from Yersinia pestis bv. Antiqua (strain Antiqua).